We begin with the raw amino-acid sequence, 116 residues long: Aspartate 1-decarboxylase (116 aa).

Ser25 acts as the Schiff-base intermediate with substrate; via pyruvic acid in catalysis. Position 25 is a pyruvic acid (Ser) (Ser25). Residue Thr57 participates in substrate binding. Tyr58 acts as the Proton donor in catalysis. 72–74 (GAA) contacts substrate.

The protein belongs to the PanD family. As to quaternary structure, heterooctamer of four alpha and four beta subunits. Requires pyruvate as cofactor. Post-translationally, is synthesized initially as an inactive proenzyme, which is activated by self-cleavage at a specific serine bond to produce a beta-subunit with a hydroxyl group at its C-terminus and an alpha-subunit with a pyruvoyl group at its N-terminus.

The protein resides in the cytoplasm. It catalyses the reaction L-aspartate + H(+) = beta-alanine + CO2. The protein operates within cofactor biosynthesis; (R)-pantothenate biosynthesis; beta-alanine from L-aspartate: step 1/1. In terms of biological role, catalyzes the pyruvoyl-dependent decarboxylation of aspartate to produce beta-alanine. This chain is Aspartate 1-decarboxylase, found in Helicobacter pylori (strain HPAG1).